A 1188-amino-acid chain; its full sequence is Spermatogenesis-associated protein 31C1 (1188 aa).

Residues Pro23–Leu43 traverse the membrane as a helical segment. 8 disordered regions span residues Pro57–Ser92, Leu121–Pro249, Pro483–Thr510, Thr530–Ser567, Met733–Pro813, Asn934–Ser1013, Gln1121–Leu1143, and Leu1155–His1188. 2 stretches are compositionally biased toward basic residues: residues Pro59–Ser68 and Arg80–Ser92. The span at Val138–Met154 shows a compositional bias: basic and acidic residues. The segment covering Ser191–Arg207 has biased composition (low complexity). The span at Pro210–Leu241 shows a compositional bias: pro residues. The span at Trp495 to Thr510 shows a compositional bias: polar residues. Composition is skewed to polar residues over residues Leu783–Ala800 and Pro943–Pro954. Positions His960–Met976 are enriched in basic and acidic residues. Positions Gln1121 to Arg1130 are enriched in polar residues.

This sequence belongs to the SPATA31 family.

It is found in the membrane. Functionally, may play a role in spermatogenesis. In Homo sapiens (Human), this protein is Spermatogenesis-associated protein 31C1 (SPATA31C1).